The primary structure comprises 252 residues: MSDWNPSLYLHFSAERSRPAVELLARVPLENVEYVADLGCGPGNSTALLQQRWPAARITGIDSSPAMIAEARSALPDCQFVEADIRNWQPVQALDLIFANASLQWLPDHYELFPHLVSLLNPQGVLAVQMPDNWLEPTHVLMREVAWEQNYPDRGREPLAGVHAYYDILSEAGCEVDIWRTTYYHQMPSHQAIIDWVTATGLRPWLQDLTESEQQLFLKRYHQMLEEQYPLQENGQILLAFPRLFIVARRME.

Belongs to the methyltransferase superfamily. Tam family.

The protein resides in the cytoplasm. It catalyses the reaction trans-aconitate + S-adenosyl-L-methionine = (E)-3-(methoxycarbonyl)pent-2-enedioate + S-adenosyl-L-homocysteine. In terms of biological role, catalyzes the S-adenosylmethionine monomethyl esterification of trans-aconitate. The polypeptide is Trans-aconitate 2-methyltransferase (Escherichia coli (strain ATCC 8739 / DSM 1576 / NBRC 3972 / NCIMB 8545 / WDCM 00012 / Crooks)).